A 461-amino-acid chain; its full sequence is tRNA modification GTPase MnmE (461 aa).

Residues R27, E89, and R128 each coordinate (6S)-5-formyl-5,6,7,8-tetrahydrofolate. The region spanning 224-382 is the TrmE-type G domain; that stretch reads GLATAIVGRP…LENAIEKLFF (159 aa). Residue N234 coordinates K(+). Residues 234–239, 253–259, and 278–281 each bind GTP; these read NVGKSS, TDIAGTT, and DTAG. S238 lines the Mg(2+) pocket. 3 residues coordinate K(+): T253, I255, and T258. A Mg(2+)-binding site is contributed by T259. K461 is a binding site for (6S)-5-formyl-5,6,7,8-tetrahydrofolate.

Belongs to the TRAFAC class TrmE-Era-EngA-EngB-Septin-like GTPase superfamily. TrmE GTPase family. In terms of assembly, homodimer. Heterotetramer of two MnmE and two MnmG subunits. K(+) is required as a cofactor.

It is found in the cytoplasm. Its function is as follows. Exhibits a very high intrinsic GTPase hydrolysis rate. Involved in the addition of a carboxymethylaminomethyl (cmnm) group at the wobble position (U34) of certain tRNAs, forming tRNA-cmnm(5)s(2)U34. The protein is tRNA modification GTPase MnmE of Lactobacillus gasseri (strain ATCC 33323 / DSM 20243 / BCRC 14619 / CIP 102991 / JCM 1131 / KCTC 3163 / NCIMB 11718 / NCTC 13722 / AM63).